Here is a 446-residue protein sequence, read N- to C-terminus: Branched-chain amino acid permease BrnQ (446 aa).

Transmembrane regions (helical) follow at residues 13-33 (ISSM…PAYL), 41-61 (LWIS…LAIA), 81-101 (KYSY…FAIP), 120-140 (MAKS…MLFF), 154-174 (FLTP…LLHP), 196-216 (VLAG…IIVI), 237-257 (TGVL…LVGA), 285-305 (GAVI…IGLI), 325-345 (WAII…TTII), 347-367 (FSLP…LLAL), 381-401 (IMTA…LPAG), and 421-441 (GLGW…KGVI).

Belongs to the branched chain amino acid transporter family.

The protein localises to the cell membrane. With respect to regulation, leucine uptake is inhibited by the proton ionophore carbonyl cyanide m-chlorophenylhydrazone (CCCP). Its function is as follows. Branched chain amino acid transport system which is involved in the uptake of leucine, valine and isoleucine. The proton motive force is probably the driving force for transport. This Lactobacillus delbrueckii subsp. lactis protein is Branched-chain amino acid permease BrnQ.